The sequence spans 121 residues: Large ribosomal subunit protein uL18 (121 aa).

Belongs to the universal ribosomal protein uL18 family. Part of the 50S ribosomal subunit; part of the 5S rRNA/L5/L18/L25 subcomplex. Contacts the 5S and 23S rRNAs.

Functionally, this is one of the proteins that bind and probably mediate the attachment of the 5S RNA into the large ribosomal subunit, where it forms part of the central protuberance. The polypeptide is Large ribosomal subunit protein uL18 (Burkholderia multivorans (strain ATCC 17616 / 249)).